The sequence spans 984 residues: Putative formate dehydrogenase SAUSA300_2258 (984 aa).

The 77-residue stretch at 3–79 (EHLVVTLDGK…PMTVNTVNND (77 aa)) folds into the 2Fe-2S ferredoxin-type domain. Residues Cys37, Cys48, Cys51, and Cys63 each contribute to the [2Fe-2S] cluster site. In terms of domain architecture, 4Fe-4S His(Cys)3-ligated-type spans 79-119 (DVKDAQKEALDRILEKHMLYCTVCDYNNGDCEIHNTMDAWG). Positions 95, 99, 102, 109, 147, 150, 153, 157, 190, 193, 196, 200, 264, 267, 271, and 299 each coordinate [4Fe-4S] cluster. 4Fe-4S ferredoxin-type domains are found at residues 138-165 (PFYRYDPNQCILCGRCVEACQDIEVNET) and 181-211 (NDVPINESSCVSCGQCATVCPCNAMMEVNME). The tract at residues 252 to 984 (MRKERIKKTK…YVFPGNQVDK (733 aa)) is formate dehydrogenase. Residues 257-313 (IKKTKTVCTYCGVGCSFEVWTKDREILKVQPSHDSPANKIATCVKGKFSWGHINSDQ) form the 4Fe-4S Mo/W bis-MGD-type domain.

It in the C-terminal section; belongs to the prokaryotic molybdopterin-containing oxidoreductase family. [2Fe-2S] cluster is required as a cofactor. The cofactor is [4Fe-4S] cluster. Requires Mo-bis(molybdopterin guanine dinucleotide) as cofactor.

The enzyme catalyses formate + NAD(+) = CO2 + NADH. This Staphylococcus aureus (strain USA300) protein is Putative formate dehydrogenase SAUSA300_2258.